Reading from the N-terminus, the 498-residue chain is Polyamine aminopropyltransferase (498 aa).

6 consecutive transmembrane segments (helical) span residues Ile-7 to Ala-27, Val-35 to Leu-55, Phe-67 to Leu-87, Ile-97 to Leu-117, Val-134 to Ala-154, and Gly-163 to Leu-183. The segment at Val-196 to Lys-446 is spermidine synthase. The PABS domain maps to Thr-200–Gln-439. Position 234 (Gln-234) interacts with S-methyl-5'-thioadenosine. Spermidine contacts are provided by His-264 and Asp-288. S-methyl-5'-thioadenosine contacts are provided by residues Asp-308 and Asp-342–Ala-343. Asp-360 functions as the Proton acceptor in the catalytic mechanism.

This sequence belongs to the spermidine/spermine synthase family. As to quaternary structure, homodimer or homotetramer.

It localises to the cell membrane. The catalysed reaction is S-adenosyl 3-(methylsulfanyl)propylamine + putrescine = S-methyl-5'-thioadenosine + spermidine + H(+). It functions in the pathway amine and polyamine biosynthesis; spermidine biosynthesis; spermidine from putrescine: step 1/1. Its function is as follows. Catalyzes the irreversible transfer of a propylamine group from the amino donor S-adenosylmethioninamine (decarboxy-AdoMet) to putrescine (1,4-diaminobutane) to yield spermidine. In Leptospira interrogans serogroup Icterohaemorrhagiae serovar copenhageni (strain Fiocruz L1-130), this protein is Polyamine aminopropyltransferase.